Here is a 283-residue protein sequence, read N- to C-terminus: tRNA pseudouridine synthase A (283 aa).

The active-site Nucleophile is Asp73. An RNA binding region spans residues 120–124 (FHARF). Tyr131 is a binding site for substrate. The segment at 181-185 (QCQSR) is interaction with tRNA.

It belongs to the tRNA pseudouridine synthase TruA family. In terms of assembly, homodimer.

It carries out the reaction uridine(38/39/40) in tRNA = pseudouridine(38/39/40) in tRNA. Formation of pseudouridine at positions 38, 39 and 40 in the anticodon stem and loop of transfer RNAs. This Pectobacterium atrosepticum (strain SCRI 1043 / ATCC BAA-672) (Erwinia carotovora subsp. atroseptica) protein is tRNA pseudouridine synthase A.